We begin with the raw amino-acid sequence, 303 residues long: Short chain dehydrogenase pigC (303 aa).

Residues isoleucine 45, aspartate 103, asparagine 130, arginine 164, tyrosine 196, lysine 200, and threonine 231 each contribute to the NADP(+) site. The Proton donor role is filled by tyrosine 196. Catalysis depends on lysine 200, which acts as the Lowers pKa of active site Tyr.

Belongs to the short-chain dehydrogenases/reductases (SDR) family.

Its pathway is secondary metabolite biosynthesis. Functionally, short chain dehydrogenase; part of the gene cluster that mediates the biosynthesis of azaphilone pigments (MonAzPs), a complex mixture of compounds with a common azaphilone skeleton very widely used as food colorants. Within the pathway, pigC intercepts the very reactive benzaldehyde produced by the nrPKS pigA to reduce the omega-1 carbonyl to the alcohol to provide the first stable enzyme-free MonAzPs intermediate, 6-(4-hydroxy-2-oxopentyl)-3-methyl-2,4-dioxocyclohexane carbaldehyde, also known as M7PKS-1. The first step of the pathway is performed by the nrPKS pigA that forms the hexaketide precursor from successive condensations of five malonyl-CoA units, with a simple acetyl-CoA starter unit. The role of esterase pigG is not clear, but it may play at most a supplementary role in the formation of the benzaldehyde produced by the pigA nrPKS. This very reactive benzaldehyde is intercepted by the pigC ketoreductase that to provide the first stable enzyme-free MonAzPs intermediate, M7PKS-1. The FAD-dependent monooxygenase pigN hydroxylates M7PKS-1 at C-4, which triggers the formation of the pyran ring. PigJ, pigK and pigD are involved in the acetylation of the pyran ring. PigJ and pigK form the two subunits of a dedicated fungal FAS that produces the side chain fatty acyl moiety of MonAzPs and pigD transfers the fatty acyl chain to the C-4 alcohol. PigM and pigO are involved in the elimination of the omega-1 alcohol. PigM acts as an O-acetyltransferase that synthesizes the putative O-11 acetyl intermediate whereas pigO eliminates acetic acid to yield an intermediate with a C10(11) double bond. The dehydration of the C-11 alcohol followed by the reduction of the C6(7) double bond by the NAD(P)H-dependent oxidoreductase pigE increases the electrophilicity of the C-5 ketone of the resulting acyl benzopyran. This in turn sets up the C-5 ketone for an intramolecular Knoevenagel aldol condensation with the C-20 enol of the side chain. This condensation affords the characteristic linear tricyclic carbon skeletons of the yellow pigments that serve as the common precursors for the classical yellow pigments monascin and ankaflavin, orange pigments rubopunctatin and monascorubrin, and red pigments ribropunctamine and monascorubramine. The FAD-dependent oxidoreductase pigF is especially invoved in the biosynthesis of orange and red pigments via desaturation of C6(7). In Monascus ruber (Mold), this protein is Short chain dehydrogenase pigC.